We begin with the raw amino-acid sequence, 196 residues long: Ribosomal RNA large subunit methyltransferase E (196 aa).

S-adenosyl-L-methionine-binding residues include glycine 52, tryptophan 54, aspartate 72, aspartate 88, and aspartate 111. Lysine 151 acts as the Proton acceptor in catalysis.

It belongs to the class I-like SAM-binding methyltransferase superfamily. RNA methyltransferase RlmE family.

It localises to the cytoplasm. The enzyme catalyses uridine(2552) in 23S rRNA + S-adenosyl-L-methionine = 2'-O-methyluridine(2552) in 23S rRNA + S-adenosyl-L-homocysteine + H(+). Its function is as follows. Specifically methylates the uridine in position 2552 of 23S rRNA at the 2'-O position of the ribose in the fully assembled 50S ribosomal subunit. This chain is Ribosomal RNA large subunit methyltransferase E, found in Cenarchaeum symbiosum (strain A).